The sequence spans 184 residues: Probable DNA-directed RNA polymerase subunit delta (184 aa).

Positions 14–81 (LSMIEVARAI…GENVWALRSW (68 aa)) constitute an HTH HARE-type domain. Disordered stretches follow at residues 88–107 (DEEVNHPEDEEEDDSRKHHK) and 118–184 (GDDD…DEDD). Over residues 118–164 (GDDDIIDYDNDDPEDDDLDAATDDSDDDYSDDDSDYDEDNDDADDVL) the composition is skewed to acidic residues.

Belongs to the RpoE family. As to quaternary structure, RNAP is composed of a core of 2 alpha, a beta and a beta' subunits. The core is associated with a delta subunit and one of several sigma factors.

Functionally, participates in both the initiation and recycling phases of transcription. In the presence of the delta subunit, RNAP displays an increased specificity of transcription, a decreased affinity for nucleic acids, and an increased efficiency of RNA synthesis because of enhanced recycling. In Lactobacillus acidophilus (strain ATCC 700396 / NCK56 / N2 / NCFM), this protein is Probable DNA-directed RNA polymerase subunit delta.